Consider the following 149-residue polypeptide: Oligosaccharyltransferase complex subunit OSTC (149 aa).

The Cytoplasmic portion of the chain corresponds to 1–32 (METLFRLPFAVLECPNIKLKRPGWVHMPSAMT). A helical membrane pass occupies residues 33–53 (VYALVVVSYFLITGGIIYDVI). The Extracellular segment spans residues 54–83 (VEPPSVGSMTDEHGHQRPVAFLAYRVNGQY). The chain crosses the membrane as a helical span at residues 84 to 104 (IMEGLASSFLFTMGGLGFIIL). Topologically, residues 105–117 (DRSNAPNIPKLNR) are cytoplasmic. The helical transmembrane segment at 118 to 138 (FLLLFIGFVSVLLSFFMARVF) threads the bilayer. The Extracellular segment spans residues 139-149 (MRMKLPGYLMG).

Belongs to the OSTC family. In terms of assembly, specific component of the STT3A-containing form of the oligosaccharyltransferase (OST) complex.

It is found in the membrane. It functions in the pathway protein modification; protein glycosylation. Specific component of the STT3A-containing form of the oligosaccharyl transferase (OST) complex that catalyzes the initial transfer of a defined glycan (Glc(3)Man(9)GlcNAc(2) in eukaryotes) from the lipid carrier dolichol-pyrophosphate to an asparagine residue within an Asn-X-Ser/Thr consensus motif in nascent polypeptide chains, the first step in protein N-glycosylation. N-glycosylation occurs cotranslationally and the complex associates with the Sec61 complex at the channel-forming translocon complex that mediates protein translocation across the endoplasmic reticulum (ER). All subunits are required for a maximal enzyme activity. The chain is Oligosaccharyltransferase complex subunit OSTC from Gallus gallus (Chicken).